The sequence spans 168 residues: GTP-dependent dephospho-CoA kinase (168 aa).

Residues aspartate 49, valine 50, valine 51, aspartate 68, lysine 70, and glutamate 120 each contribute to the GTP site.

This sequence belongs to the GTP-dependent DPCK family.

It carries out the reaction 3'-dephospho-CoA + GTP = GDP + CoA + H(+). It participates in cofactor biosynthesis; coenzyme A biosynthesis. Catalyzes the GTP-dependent phosphorylation of the 3'-hydroxyl group of dephosphocoenzyme A to form coenzyme A (CoA). The protein is GTP-dependent dephospho-CoA kinase of Pyrobaculum neutrophilum (strain DSM 2338 / JCM 9278 / NBRC 100436 / V24Sta) (Thermoproteus neutrophilus).